A 333-amino-acid chain; its full sequence is Phenylalanine--tRNA ligase alpha subunit (333 aa).

Residue Glu-248 participates in Mg(2+) binding.

This sequence belongs to the class-II aminoacyl-tRNA synthetase family. Phe-tRNA synthetase alpha subunit type 1 subfamily. In terms of assembly, tetramer of two alpha and two beta subunits. It depends on Mg(2+) as a cofactor.

Its subcellular location is the cytoplasm. It catalyses the reaction tRNA(Phe) + L-phenylalanine + ATP = L-phenylalanyl-tRNA(Phe) + AMP + diphosphate + H(+). This chain is Phenylalanine--tRNA ligase alpha subunit, found in Ureaplasma urealyticum serovar 10 (strain ATCC 33699 / Western).